Reading from the N-terminus, the 357-residue chain is Phosphoribosylformylglycinamidine cyclo-ligase (357 aa).

It belongs to the AIR synthase family.

The protein resides in the cytoplasm. It carries out the reaction 2-formamido-N(1)-(5-O-phospho-beta-D-ribosyl)acetamidine + ATP = 5-amino-1-(5-phospho-beta-D-ribosyl)imidazole + ADP + phosphate + H(+). It functions in the pathway purine metabolism; IMP biosynthesis via de novo pathway; 5-amino-1-(5-phospho-D-ribosyl)imidazole from N(2)-formyl-N(1)-(5-phospho-D-ribosyl)glycinamide: step 2/2. The sequence is that of Phosphoribosylformylglycinamidine cyclo-ligase from Rhizobium etli (strain ATCC 51251 / DSM 11541 / JCM 21823 / NBRC 15573 / CFN 42).